The chain runs to 408 residues: Argininosuccinate synthase (408 aa).

Residues 10 to 18 and alanine 37 each bind ATP; that span reads AYSGGLDTS. Positions 90 and 95 each coordinate L-citrulline. Glycine 120 provides a ligand contact to ATP. L-aspartate is bound by residues threonine 122, asparagine 126, and aspartate 127. Asparagine 126 contacts L-citrulline. Arginine 130, serine 182, serine 191, glutamate 267, and tyrosine 279 together coordinate L-citrulline.

Belongs to the argininosuccinate synthase family. Type 1 subfamily. As to quaternary structure, homotetramer.

The protein resides in the cytoplasm. The enzyme catalyses L-citrulline + L-aspartate + ATP = 2-(N(omega)-L-arginino)succinate + AMP + diphosphate + H(+). The protein operates within amino-acid biosynthesis; L-arginine biosynthesis; L-arginine from L-ornithine and carbamoyl phosphate: step 2/3. This chain is Argininosuccinate synthase, found in Paraburkholderia phytofirmans (strain DSM 17436 / LMG 22146 / PsJN) (Burkholderia phytofirmans).